The chain runs to 426 residues: Hemojuvelin (426 aa).

An N-terminal signal peptide occupies residues 1-35 (MGEPGQSPSPRSSHGSPPTLSTLTLLLLLCGHAHS). Residue Y46 is modified to Phosphotyrosine. N118 carries an N-linked (GlcNAc...) asparagine glycan. Positions 119–142 (CSRQGPTAPPPPRGPALPGAGSGL) are disordered. Disulfide bonds link C148-C230 and C167-C317. N-linked (GlcNAc...) asparagine glycosylation is found at N213 and N372. D400 carries the GPI-anchor amidated aspartate lipid modification. Positions 401–426 (AGVPLSSATLLAPLLSGLFVLWLCIQ) are cleaved as a propeptide — removed in mature form.

The protein belongs to the repulsive guidance molecule (RGM) family. As to quaternary structure, interacts with BMP2 and BMP4. Interacts with BMP6. Interacts with BMPR1B. Interacts with TMPRSS6. Post-translationally, autocatalytically cleaved at low pH; the two chains remain linked via two disulfide bonds. Also proteolytically processed by TMPRSS6, several fragments being released in the extracellular space; regulates HJV activity in BMP signaling and thefore iron homeostasis. In terms of tissue distribution, adult and fetal liver, heart, and skeletal muscle.

It is found in the cell membrane. Its function is as follows. Acts as a bone morphogenetic protein (BMP) coreceptor. Through enhancement of BMP signaling regulates hepcidin (HAMP) expression and regulates iron homeostasis. The polypeptide is Hemojuvelin (Homo sapiens (Human)).